We begin with the raw amino-acid sequence, 194 residues long: MQQIQISDAAQGHFRKLLDQQEEGTNIRIFVVNPGTPNAECGVSYCPPNAVEATDTEMKYATFSAFVDEVSLPFLEDAEIDYVTEELGTQLTLKAPNAKMRKVADDAPLIERVDYVIQTQINPQLASHGGRITLVEITDEGYAILQFGGGCNGCSMVDVTLKDGVEKQLVELFAGELKGAKDITEHQRGEHSYY.

[4Fe-4S] cluster contacts are provided by Cys151 and Cys154.

The protein belongs to the NfuA family. As to quaternary structure, homodimer. [4Fe-4S] cluster is required as a cofactor.

Functionally, involved in iron-sulfur cluster biogenesis. Binds a 4Fe-4S cluster, can transfer this cluster to apoproteins, and thereby intervenes in the maturation of Fe/S proteins. Could also act as a scaffold/chaperone for damaged Fe/S proteins. The chain is Fe/S biogenesis protein NfuA from Mannheimia succiniciproducens (strain KCTC 0769BP / MBEL55E).